We begin with the raw amino-acid sequence, 484 residues long: Ubiquinone biosynthesis monooxygenase COQ6, mitochondrial (484 aa).

Residues 1-41 (MLSLAKAKLAVVGIGRQCVAVRTLNGARAVHRSFSSSEHDQ) constitute a mitochondrion transit peptide.

This sequence belongs to the UbiH/COQ6 family. In terms of assembly, component of a multi-subunit COQ enzyme complex, composed of at least coq3, coq4, coq5, coq6, coq7 and coq9. Interacts with coq8b and coq7. Requires FAD as cofactor.

Its subcellular location is the mitochondrion inner membrane. It is found in the golgi apparatus. The protein localises to the cell projection. The enzyme catalyses a 4-hydroxy-3-(all-trans-polyprenyl)benzoate + 2 reduced [2Fe-2S]-[ferredoxin] + O2 + 2 H(+) = a 3,4-dihydroxy-5-(all-trans-polyprenyl)benzoate + 2 oxidized [2Fe-2S]-[ferredoxin] + H2O. It carries out the reaction a 2-methoxy-6-(all-trans-polyprenyl)phenol + 2 reduced [2Fe-2S]-[ferredoxin] + O2 + 2 H(+) = a 2-methoxy-6-(all-trans-polyprenyl)benzene-1,4-diol + 2 oxidized [2Fe-2S]-[ferredoxin] + H2O. It functions in the pathway cofactor biosynthesis; ubiquinone biosynthesis. In terms of biological role, FAD-dependent monooxygenase required for two non-consecutive steps during ubiquinone biosynthesis. Required for the C5-ring hydroxylation during ubiquinone biosynthesis by catalyzing the hydroxylation of 4-hydroxy-3-(all-trans-polyprenyl)benzoic acid to 3,4-dihydroxy-5-(all-trans-polyprenyl)benzoic acid. Also acts downstream of coq4, for the C1-hydroxylation during ubiquinone biosynthesis by catalyzing the hydroxylation of 2-methoxy-6-(all-trans-polyprenyl)phenol to 2-methoxy-6-(all-trans-polyprenyl)benzene-1,4-diol. The electrons required for the hydroxylation reaction are funneled indirectly to coq6 from NADPH via a ferredoxin/ferredoxin reductase system. The chain is Ubiquinone biosynthesis monooxygenase COQ6, mitochondrial from Danio rerio (Zebrafish).